The sequence spans 393 residues: Phosphoglycerate kinase (393 aa).

Substrate-binding positions include 21-23, Arg-36, 59-62, Arg-114, and Arg-147; these read DLN and HLGR. Residues Lys-198, Glu-314, and 340-343 each bind ATP; that span reads GGDT.

Belongs to the phosphoglycerate kinase family. As to quaternary structure, monomer.

It is found in the cytoplasm. It catalyses the reaction (2R)-3-phosphoglycerate + ATP = (2R)-3-phospho-glyceroyl phosphate + ADP. It participates in carbohydrate degradation; glycolysis; pyruvate from D-glyceraldehyde 3-phosphate: step 2/5. This is Phosphoglycerate kinase from Buchnera aphidicola subsp. Baizongia pistaciae (strain Bp).